Reading from the N-terminus, the 115-residue chain is Putative ethidium bromide resistance protein (115 aa).

The next 4 membrane-spanning stretches (helical) occupy residues 4–21 (WLFL…TSAL), 30–47 (LAPS…FYFL), 58–79 (VAYA…WLLH), and 85–104 (AWGF…ARSP).

This sequence belongs to the drug/metabolite transporter (DMT) superfamily. Small multidrug resistance (SMR) (TC 2.A.7.1) family.

The protein resides in the cell membrane. Its function is as follows. One of the determinants for resistance to ethidium bromide and quaternary ammonium compounds. This chain is Putative ethidium bromide resistance protein (ebr), found in Escherichia coli.